Here is a 282-residue protein sequence, read N- to C-terminus: Bis(5'-nucleosyl)-tetraphosphatase, symmetrical (282 aa).

This sequence belongs to the Ap4A hydrolase family.

The enzyme catalyses P(1),P(4)-bis(5'-adenosyl) tetraphosphate + H2O = 2 ADP + 2 H(+). Its function is as follows. Hydrolyzes diadenosine 5',5'''-P1,P4-tetraphosphate to yield ADP. The protein is Bis(5'-nucleosyl)-tetraphosphatase, symmetrical of Paraburkholderia phymatum (strain DSM 17167 / CIP 108236 / LMG 21445 / STM815) (Burkholderia phymatum).